Here is a 746-residue protein sequence, read N- to C-terminus: F-box only protein 30 (746 aa).

The segment at 49-110 (EHRLLCPFER…SYSDRKSYES (62 aa)) adopts a TRAF-type zinc-finger fold. Disordered regions lie at residues 222–241 (MDEE…DQDH) and 247–266 (IGAV…QAEQ). The span at 225–241 (ENNKESFQDKNLKDQDH) shows a compositional bias: basic and acidic residues. Residues 256-266 (SGTSQNAQAEQ) are compositionally biased toward polar residues. Serine 383 carries the phosphoserine modification. One can recognise an F-box domain in the interval 611–659 (SDHLSSLPFEVLQHIAGFLDGFSLCQLACVSRLMRDVCGSLLQSRGMVI).

As to quaternary structure, part of a SCF (SKP1-cullin-F-box) protein ligase complex. Interacts with SKP1, CUL1 and RBX1/ROC1. In terms of processing, auto-ubiquitinated. Post-translationally, may be neddylated. Neddylation may be required for E3 ligase activity, since it was observed only after purification with o-phenanthroline.

It participates in protein modification; protein ubiquitination. Substrate-recognition component of the SCF (SKP1-CUL1-F-box protein)-type E3 ubiquitin ligase complex. Required for muscle atrophy following denervation. The polypeptide is F-box only protein 30 (Fbxo30) (Mus musculus (Mouse)).